We begin with the raw amino-acid sequence, 128 residues long: Protein Wnt-2b-B (128 aa).

Cystine bridges form between Cys-3/Cys-16 and Cys-5/Cys-11. Ser-8 carries the O-palmitoleoyl serine; by PORCN lipid modification. Asn-48 carries an N-linked (GlcNAc...) asparagine glycan. 2 disulfides stabilise this stretch: Cys-90-Cys-105 and Cys-127-Cys-128.

The protein belongs to the Wnt family. Palmitoleoylation is required for efficient binding to frizzled receptors. Depalmitoleoylation leads to Wnt signaling pathway inhibition.

It localises to the secreted. The protein localises to the extracellular space. It is found in the extracellular matrix. In terms of biological role, ligand for members of the frizzled family of seven transmembrane receptors. Functions in the canonical Wnt/beta-catenin signaling pathway. The polypeptide is Protein Wnt-2b-B (wnt2b-b) (Xenopus laevis (African clawed frog)).